Reading from the N-terminus, the 88-residue chain is Meiosis expressed gene 1 protein homolog (88 aa).

Belongs to the MEIG1 family. Interacts with PACRG. Interacts with MORN3.

Essential for spermiogenesis. The polypeptide is Meiosis expressed gene 1 protein homolog (Homo sapiens (Human)).